Here is a 264-residue protein sequence, read N- to C-terminus: Taurine import ATP-binding protein TauB (264 aa).

In terms of domain architecture, ABC transporter spans 4-233 (LQLERISAQY…RYAAGESARA (230 aa)). 38-45 (GPSGSGKT) contributes to the ATP binding site.

It belongs to the ABC transporter superfamily. Taurine importer (TC 3.A.1.17.1) family. The complex is composed of two ATP-binding proteins (TauB), two transmembrane proteins (TauC) and a solute-binding protein (TauA).

The protein resides in the cell inner membrane. It catalyses the reaction taurine(out) + ATP + H2O = taurine(in) + ADP + phosphate + H(+). Functionally, part of the ABC transporter complex TauABC involved in taurine import. Responsible for energy coupling to the transport system. This Pseudomonas fluorescens (strain ATCC BAA-477 / NRRL B-23932 / Pf-5) protein is Taurine import ATP-binding protein TauB.